We begin with the raw amino-acid sequence, 151 residues long: uncharacterized protein (151 aa).

This is an uncharacterized protein from Acanthamoeba polyphaga mimivirus (APMV).